Consider the following 329-residue polypeptide: Delta-aminolevulinic acid dehydratase (329 aa).

Lys-202 serves as the catalytic Schiff-base intermediate with substrate. 5-aminolevulinate-binding residues include Arg-212 and Arg-223. Residue Glu-239 coordinates Mg(2+). Lys-254 functions as the Schiff-base intermediate with substrate in the catalytic mechanism. Residues Ser-280 and Tyr-319 each coordinate 5-aminolevulinate.

Belongs to the ALAD family. In terms of assembly, homooctamer.

The catalysed reaction is 2 5-aminolevulinate = porphobilinogen + 2 H2O + H(+). It functions in the pathway porphyrin-containing compound metabolism; protoporphyrin-IX biosynthesis; coproporphyrinogen-III from 5-aminolevulinate: step 1/4. Catalyzes an early step in the biosynthesis of tetrapyrroles. Binds two molecules of 5-aminolevulinate per subunit, each at a distinct site, and catalyzes their condensation to form porphobilinogen. The sequence is that of Delta-aminolevulinic acid dehydratase (hemB) from Mycobacterium leprae (strain TN).